Consider the following 217-residue polypeptide: Urease accessory protein UreE (217 aa).

Positions 148–217 are disordered; the sequence is AYGEAAAHGH…DHDHGSGHHH (70 aa). Residues 160–171 are compositionally biased toward basic and acidic residues; that stretch reads AGHDHAHDHDHG. The span at 193 to 202 shows a compositional bias: low complexity; sequence AAAPAPHVHG. The span at 206-217 shows a compositional bias: basic and acidic residues; the sequence is GHDHDHGSGHHH.

This sequence belongs to the UreE family.

The protein localises to the cytoplasm. Functionally, involved in urease metallocenter assembly. Binds nickel. Probably functions as a nickel donor during metallocenter assembly. The polypeptide is Urease accessory protein UreE (Methylibium petroleiphilum (strain ATCC BAA-1232 / LMG 22953 / PM1)).